Consider the following 269-residue polypeptide: MTDVPSKPPQTTPPPKPKSRAPTTIFSSPPQLPDRSSLNISHTASTPTLTPTPLQQQQIHTDGNSQQPKSSPPPLPERQSFSNSPNRQTQSFIQKPALPPRDSQYNTISGSTVFKSNNNINNNNNDSHIITNGNASTSFIQGNRVTRVLNTNKSEPILQQPQQSHSPQQQQQQHTPNHQQPLSPQQQKDLAQKRSTMPLPPRPNKNRPLPTPISPESHPLTINEENSITEDKEQQPQQSAPPQPQLQQSQQNTDNSRKPIVAPPTPTIQ.

The segment covering 1-16 has biased composition (pro residues); it reads MTDVPSKPPQTTPPPK. 2 disordered regions span residues 1–110 and 157–269; these read MTDV…TISG and ILQQ…PTIQ. Polar residues predominate over residues 21 to 45; that stretch reads APTTIFSSPPQLPDRSSLNISHTAS. Positions 46–58 are enriched in low complexity; sequence TPTLTPTPLQQQQ. Residues 80 to 93 show a composition bias toward polar residues; it reads SFSNSPNRQTQSFI. Residues 159–181 are compositionally biased toward low complexity; that stretch reads QQPQQSHSPQQQQQQHTPNHQQP. Polar residues predominate over residues 182-195; it reads LSPQQQKDLAQKRS. The segment covering 198–213 has biased composition (pro residues); it reads PLPPRPNKNRPLPTPI.

This is an uncharacterized protein from Dictyostelium discoideum (Social amoeba).